Consider the following 161-residue polypeptide: Abscisic acid receptor PYL11 (161 aa).

Positions 3-154 (TSQKYHTCGS…NLKSLAKLSE (152 aa)) are START-like. Residues Lys39, 68-73 (AEFSRE), 95-101 (RLVNYRS), and Glu119 each bind abscisate. A Gate loop motif is present at residues 64–68 (SGLPA). The Latch loop motif lies at 94-96 (HRL).

The protein belongs to the PYR/PYL/RCAR abscisic acid intracellular receptor family. Homodimer. Binds ABA on one subunit only. Interacts with PP2Cs. Binds to CARs protein in an ABA-independent manner, both at the plasma membrane and in the nucleus. Interacts with I-2 and TOPP1.

Its subcellular location is the cytoplasm. It is found in the nucleus. It localises to the cell membrane. In terms of biological role, receptor for abscisic acid (ABA) required for ABA-mediated responses such as stomatal closure and germination inhibition. Inhibits the activity of group-A protein phosphatases type 2C (PP2Cs) when activated by ABA. Suppresses the phosphatase activity of TOPP1 in a dose-dependent manner in vitro. The chain is Abscisic acid receptor PYL11 (PYL11) from Arabidopsis thaliana (Mouse-ear cress).